Reading from the N-terminus, the 536-residue chain is Probable serine/threonine-protein kinase DDB_G0268550 (536 aa).

The region spanning E14–L305 is the Protein kinase domain. Residues Y20–I28 and K51 each bind ATP. Residue D147 is the Proton acceptor of the active site. Residues D161 to S192 are disordered.

It belongs to the protein kinase superfamily. Ser/Thr protein kinase family. It depends on Mg(2+) as a cofactor.

The catalysed reaction is L-seryl-[protein] + ATP = O-phospho-L-seryl-[protein] + ADP + H(+). The enzyme catalyses L-threonyl-[protein] + ATP = O-phospho-L-threonyl-[protein] + ADP + H(+). This Dictyostelium discoideum (Social amoeba) protein is Probable serine/threonine-protein kinase DDB_G0268550.